The chain runs to 220 residues: Translation initiation factor 6 (220 aa).

It belongs to the eIF-6 family.

Functionally, binds to the 50S ribosomal subunit and prevents its association with the 30S ribosomal subunit to form the 70S initiation complex. This is Translation initiation factor 6 from Halobacterium salinarum (strain ATCC 29341 / DSM 671 / R1).